Reading from the N-terminus, the 483-residue chain is MDFTALFASLNPTFASVSHCGNWIASLSRSGHVLIRNSETLELHHVFLLNAQFIQKVVYLLWKPNLGAEKCHQICVASVDKVFVLDIVQHDYYASIQCDQDPLSSISWSPSGELLLWSSFDSKITVWSLNTQKGYLLPHVKTNVSKVYALHPSMQFCTILSRFNGSDCLQFYQISKKAWILLKECKLPTIDSTGIHWSPDGNWLAVLENVLDAVVYIYHRTGLLFHEYRPNRLIEVGFSDFEWSPFGKYLTLCSYHDSTLHLLETKTFSIVFRLHHCLQYTNTDLEMHIWEEKETIYEQQMTYQKVHKLRTDFPEPSFCSASKIRFNCDETYAATITSKYPNVLWLWNLQNKKLHTVLIQKHHIVYFEWHPGRPDLVVIQTKIRKESKIPSNATFLYFWALSWNTPRVVGVPKKGFNIQKVQWLQPSEFSSRPVIVICGEDAYTVAYIVEDEDESFTEVTQTIISQEVLDNELETTQTISIPS.

Residues 96 to 137 form a WD repeat; it reads IQCDQDPLSSISWSPSGELLLWSSFDSKITVWSLNTQKGYLL.

This is an uncharacterized protein from Schizosaccharomyces pombe (strain 972 / ATCC 24843) (Fission yeast).